We begin with the raw amino-acid sequence, 403 residues long: MVQSVLSSTSHGSERADMSAASPQGFHCWTTHLGLADEGKDDFSMVISDRPCTSSVVFTKSLFAGPCVTLSKTSIEQTSPRGVLVLAKNANVATGAEGLRNASEIRASVARTVGIEPDALIMASTGVIGVQYPMDTIRAGLDGLGQGTPLDAHAVARAIMTTDTRAKVSERAVGTSTIVGIAKGVGMIEPDMATMLSFVFTDADVPQDTLNRIFRDVVDRTYNSVSIDTDTSTSDTAAVFANGSAGPVPDTEFEQALEEVCTDLVKMIASDGEGATKLIVTTVSGASSERQARVVGKSIINSPLVKTMIHGEDPNWGRVLMAIGKCSNEVDIEPDRIRVAFADIDVYPSSSLDQHDTVEVVREHLATVTVEINVDLGIGTDTWRVFGCDLTDEYIRINADYTT.

Positions 1-11 (MVQSVLSSTSH) are enriched in polar residues. Residues 1–21 (MVQSVLSSTSHGSERADMSAA) form a disordered region. Thr161, Lys183, Thr194, Glu273, Asn398, and Thr403 together coordinate substrate. Thr194 functions as the Nucleophile in the catalytic mechanism.

The protein belongs to the ArgJ family. Heterotetramer of two alpha and two beta chains.

The protein localises to the cytoplasm. The enzyme catalyses N(2)-acetyl-L-ornithine + L-glutamate = N-acetyl-L-glutamate + L-ornithine. It carries out the reaction L-glutamate + acetyl-CoA = N-acetyl-L-glutamate + CoA + H(+). Its pathway is amino-acid biosynthesis; L-arginine biosynthesis; L-ornithine and N-acetyl-L-glutamate from L-glutamate and N(2)-acetyl-L-ornithine (cyclic): step 1/1. It functions in the pathway amino-acid biosynthesis; L-arginine biosynthesis; N(2)-acetyl-L-ornithine from L-glutamate: step 1/4. Functionally, catalyzes two activities which are involved in the cyclic version of arginine biosynthesis: the synthesis of N-acetylglutamate from glutamate and acetyl-CoA as the acetyl donor, and of ornithine by transacetylation between N(2)-acetylornithine and glutamate. The protein is Arginine biosynthesis bifunctional protein ArgJ of Rhodococcoides fascians (Rhodococcus fascians).